A 183-amino-acid polypeptide reads, in one-letter code: DELTA-miturgitoxin-Cp1b (183 aa).

The first 20 residues, 1–20 (MKFSLFFSVFFLAVLHACLS), serve as a signal peptide directing secretion. A propeptide spanning residues 21-47 (ESEIDLEDEEHFMSSDSFLSEIQDESR) is cleaved from the precursor. Residues 44 to 47 (DESR) carry the Processing quadruplet motif motif. 8 disulfide bridges follow: Cys-51–Cys-66, Cys-58–Cys-75, Cys-65–Cys-88, Cys-77–Cys-86, Cys-115–Cys-130, Cys-122–Cys-139, Cys-129–Cys-157, and Cys-141–Cys-155. Residues 164–177 (QAIEGALRIAKKLI) are predicted alpha-helix. At Trp-181 the chain carries Tryptophan amide.

The protein belongs to the neurotoxin 19 (CSTX) family. Double-CSTX subfamily. Cleavage of the propeptide depends on the processing quadruplet motif (XXXR, with at least one of X being E). In terms of tissue distribution, expressed by the venom gland.

It localises to the secreted. The protein resides in the target cell membrane. In terms of biological role, spider venom toxin that exhibits cytolytic activity by forming an alpha-helix across the membrane. Lethal to insect larvae. Causes instant paralysis and death in the larvae of the flesh fly (S.carnaria) at doses of 20 ug/g, at doses of less than 10 ug/g causes reversible paralysis. Has cytolytic activity against insect Sf9 cells. Causes stable and irreversible depolarization of fly muscle fibers, leading to contracture at higher toxin concentrations. Destabilizes membranes. This Cheiracanthium punctorium (Yellow sac spider) protein is DELTA-miturgitoxin-Cp1b.